Consider the following 289-residue polypeptide: CBY1-interacting BAR domain-containing protein 1 (289 aa).

The transit peptide at 1 to 47 (MMRRTLENRNAQTKQLQTAVSNVEKHFGELCQIFAAYVRKTARLRDK) directs the protein to the mitochondrion. Positions 10-220 (NAQTKQLQTA…NIDEDEDLEV (211 aa)) are BAR-like. Residues 107 to 178 (KMKRDDLKAT…INNFERQKMK (72 aa)) are a coiled coil. Positions 265–289 (LRKDQQAEDDEDDELDVTEEENFLK) are disordered. The span at 271–289 (AEDDEDDELDVTEEENFLK) shows a compositional bias: acidic residues.

Belongs to the CIBAR family. In terms of assembly, homodimer (via BAR-like domain). Heterodimer with FAM92B (via BAR-like domains). Interacts (via BAR-like domain) with CBY1; this interaction is required for targeting FAM92A to centriole and cilium basal body. Interacts (via BAR-like domain) with CBY3; both proteins form a ninefold symmetric structure at the flagellar base; are recruited to the annulus in a mutually dependent manner and regulate annulus positionning.

The protein resides in the cytoplasm. It localises to the cytoskeleton. The protein localises to the microtubule organizing center. Its subcellular location is the centrosome. It is found in the centriole. The protein resides in the cilium basal body. It localises to the cell projection. The protein localises to the cilium. Its subcellular location is the nucleus. It is found in the mitochondrion inner membrane. The protein resides in the flagellum. Its function is as follows. Plays a critical role in regulating mitochondrial ultrastructure and function by maintaining the integrity of mitochondrial morphology, particularly the organization of cristae. Preferentially binds to negatively charged phospholipids like cardiolipin and phosphatidylinositol 4,5-bisphosphate enhancing its interaction with mitochondrial membranes. Induces membrane curvature and tubulation, which are critical for maintaining mitochondrial ultrastructure and the organization of cristae. Plays a crucial role in ciliogenesis. May play a role in limb development through its role in ciliogenesis. Plays a key role in the correct positioning of the annulus, a septin-based ring structure in the sperm flagellum, serving both as a physical barrier and a membrane diffusion barrier that separates the midpiece (MP) from the principal piece (PP). This positioning is essential for proper sperm motility and function. Interacts with CBY3 to form a complex which localizes to the curved membrane region of the flagellar pocket. By doing so, may provide stability and rigidity to the periannular membrane to prevent membrane deformation. This function is crucial for halting annulus migration at the proximal end of the fibrous sheath-containing PP. In Homo sapiens (Human), this protein is CBY1-interacting BAR domain-containing protein 1.